We begin with the raw amino-acid sequence, 220 residues long: RPA-interacting protein B (220 aa).

The interaction with importin beta stretch occupies residues Met-1–Gly-45. The interval His-49 to Ser-165 is interaction with RPA1. The segment at Cys-138–Cys-213 adopts an RIP-type zinc-finger fold.

As to quaternary structure, interacts directly with the RPA1 subunit of RPA complex. Interacts with importin beta, but not with importin alpha. Forms a complex with the RPA complex and importin beta, which is dissociated by Ran-GTP.

The protein resides in the nucleus. Mediates the import of RPA complex into the nucleus, via its interaction with importin beta. This is RPA-interacting protein B (rpain-b) from Xenopus laevis (African clawed frog).